The chain runs to 328 residues: MQAAWLLGALLVPHLLSFGHGARGHGKEWEGVWGGALEEERDRESLMLKNLQEALGLPTGVGNKDNLAENSEGKEVWEATETQGEEEEEETTTTPSSSPTPFPSPSPTSEDTVTYILGRLASLDAGLHQLHIRLHVLDTRVVELTQGLRRLRDAASDTRDSVQALKEVQVRSEQEHGRLEGCLKGLRLGHKCFLLSRDFETQAAAQARCKARGGSLAQPADRQQMDALSRYLRAALAPYNWPVWLGVHDRRSEGLYLFENGQRVSFFAWHRALSPESGAQPSAASHPLSPDQPNGGILENCVAQASDDGSWWDHDCERRLYFVCEFPF.

The signal sequence occupies residues 1 to 21 (MQAAWLLGALLVPHLLSFGHG). Residues 58 to 111 (PTGVGNKDNLAENSEGKEVWEATETQGEEEEEETTTTPSSSPTPFPSPSPTSED) are disordered. The 138-residue stretch at 188–325 (LGHKCFLLSR…CERRLYFVCE (138 aa)) folds into the C-type lectin domain. 2 disulfides stabilise this stretch: C209/C324 and C301/C316.

In terms of processing, O-glycosylated. Probably sulfated on the O-glycans.

It is found in the cytoplasm. The protein localises to the secreted. In terms of biological role, promotes osteogenesis by stimulating the differentiation of mesenchymal progenitors into mature osteoblasts. Important for repair and maintenance of adult bone. The protein is C-type lectin domain family 11 member A (Clec11a) of Rattus norvegicus (Rat).